A 400-amino-acid chain; its full sequence is Dual-specificity RNA methyltransferase RlmN (400 aa).

Glutamate 125 functions as the Proton acceptor in the catalytic mechanism. One can recognise a Radical SAM core domain in the interval 131-372 (ETDRGTLCVS…VRTPRGRDIL (242 aa)). A disulfide bridge connects residues cysteine 138 and cysteine 375. Residues cysteine 145, cysteine 149, and cysteine 152 each contribute to the [4Fe-4S] cluster site. S-adenosyl-L-methionine is bound by residues 201–202 (GE), serine 233, 255–257 (SLH), and asparagine 332. Catalysis depends on cysteine 375, which acts as the S-methylcysteine intermediate.

This sequence belongs to the radical SAM superfamily. RlmN family. Requires [4Fe-4S] cluster as cofactor.

It localises to the cytoplasm. The catalysed reaction is adenosine(2503) in 23S rRNA + 2 reduced [2Fe-2S]-[ferredoxin] + 2 S-adenosyl-L-methionine = 2-methyladenosine(2503) in 23S rRNA + 5'-deoxyadenosine + L-methionine + 2 oxidized [2Fe-2S]-[ferredoxin] + S-adenosyl-L-homocysteine. The enzyme catalyses adenosine(37) in tRNA + 2 reduced [2Fe-2S]-[ferredoxin] + 2 S-adenosyl-L-methionine = 2-methyladenosine(37) in tRNA + 5'-deoxyadenosine + L-methionine + 2 oxidized [2Fe-2S]-[ferredoxin] + S-adenosyl-L-homocysteine. Specifically methylates position 2 of adenine 2503 in 23S rRNA and position 2 of adenine 37 in tRNAs. m2A2503 modification seems to play a crucial role in the proofreading step occurring at the peptidyl transferase center and thus would serve to optimize ribosomal fidelity. In Bradyrhizobium diazoefficiens (strain JCM 10833 / BCRC 13528 / IAM 13628 / NBRC 14792 / USDA 110), this protein is Dual-specificity RNA methyltransferase RlmN.